Consider the following 294-residue polypeptide: Transmembrane protein 178B (294 aa).

The N-terminal stretch at 1–23 is a signal peptide; the sequence is MAAGKLLLYAGLSLSLCALGMLA. 3 helical membrane-spanning segments follow: residues 172 to 192, 206 to 226, and 252 to 272; these read AGFMGMAVAIILFGWIIGMLG, LLFLMGGTFCIISLCTCVAGI, and MFCAWGGLGLSLIAGFFCTLA.

It belongs to the TMEM178 family.

Its subcellular location is the membrane. In Danio rerio (Zebrafish), this protein is Transmembrane protein 178B (tmem178b).